The sequence spans 606 residues: Transmembrane 9 superfamily member 1 (606 aa).

The N-terminal stretch at 1-27 (MTVLGYPRSWSCHCLPVLILLLGIGHG) is a signal peptide. Asn-178 carries N-linked (GlcNAc...) asparagine glycosylation. A run of 4 helical transmembrane segments spans residues 237-257 (LSII…AVIL), 310-330 (VLGV…MALL), 339-359 (GAIN…SGYV), and 373-393 (VWNI…TWSV). A glycan (N-linked (GlcNAc...) asparagine) is linked at Asn-401. Helical transmembrane passes span 412-432 (ILLL…IGGI), 469-489 (VGGF…FATV), 499-519 (GILF…SIAL), and 535-555 (SVLS…FYYA). Asn-559 carries an N-linked (GlcNAc...) asparagine glycan. A helical membrane pass occupies residues 570–590 (FGYSLLTGYVFFLMLGTISFF).

It belongs to the nonaspanin (TM9SF) (TC 9.A.2) family.

It is found in the lysosome membrane. The protein localises to the cytoplasmic vesicle. It localises to the autophagosome membrane. In terms of biological role, plays an essential role in autophagy. This chain is Transmembrane 9 superfamily member 1 (Tm9sf1), found in Mus musculus (Mouse).